The sequence spans 101 residues: Precursor of CEP6 (101 aa).

The signal sequence occupies residues 1–26 (MKLSVYIILSILFISTVFYEIQFTEA). Residues 27 to 48 (RQLRKTDDQDHDDHHFTVGYTD) constitute a propeptide that is removed on maturation. Basic and acidic residues predominate over residues 29 to 42 (LRKTDDQDHDDHHF). A disordered region spans residues 29–101 (LRKTDDQDHD…HAVKNNEPNA (73 aa)). Hydroxyproline is present on residues P52, P55, and P59. Residues 64–77 (KMKENEENAGGYKD) constitute a propeptide that is removed on maturation. Basic and acidic residues predominate over residues 64–79 (KMKENEENAGGYKDDF). 3 positions are modified to hydroxyproline: P81, P84, and P88. A propeptide spanning residues 93–101 (AVKNNEPNA) is cleaved from the precursor.

The protein belongs to the C-terminally encoded plant signaling peptide (CEP) family. In terms of assembly, interacts with CEP receptors (e.g. CEPR1 and CEPR2). In terms of processing, the mature small signaling peptide is generated by proteolytic processing of the longer precursor. Expressed in lateral root primordia and in lateral roots excluding the meristem region. Also present in the aerial tissues, such as leaf petioles and the shoot apex region.

Its subcellular location is the secreted. The protein localises to the extracellular space. It is found in the apoplast. In terms of biological role, extracellular signaling peptide that represses primary root growth rate. Modulates leaf morphology. Regulates systemic nitrogen (N)-demand signaling. Mediates up-regulation of genes involved in N uptake and assimilation pathways. The chain is Precursor of CEP6 from Arabidopsis thaliana (Mouse-ear cress).